A 415-amino-acid polypeptide reads, in one-letter code: Branched-chain-amino-acid aminotransferase 5, chloroplastic (415 aa).

Residues methionine 1–arginine 65 constitute a chloroplast transit peptide. N6-(pyridoxal phosphate)lysine is present on lysine 261.

It belongs to the class-IV pyridoxal-phosphate-dependent aminotransferase family. Pyridoxal 5'-phosphate serves as cofactor.

The protein localises to the plastid. The protein resides in the chloroplast. It catalyses the reaction L-leucine + 2-oxoglutarate = 4-methyl-2-oxopentanoate + L-glutamate. It carries out the reaction L-isoleucine + 2-oxoglutarate = (S)-3-methyl-2-oxopentanoate + L-glutamate. The catalysed reaction is L-valine + 2-oxoglutarate = 3-methyl-2-oxobutanoate + L-glutamate. The protein operates within amino-acid biosynthesis; L-isoleucine biosynthesis; L-isoleucine from 2-oxobutanoate: step 4/4. It participates in amino-acid biosynthesis; L-leucine biosynthesis; L-leucine from 3-methyl-2-oxobutanoate: step 4/4. Its pathway is amino-acid biosynthesis; L-valine biosynthesis; L-valine from pyruvate: step 4/4. Functionally, converts 2-oxo acids to branched-chain amino acids. Acts on leucine, isoleucine and valine. This Arabidopsis thaliana (Mouse-ear cress) protein is Branched-chain-amino-acid aminotransferase 5, chloroplastic (BCAT5).